The primary structure comprises 967 residues: Phosphoenolpyruvate carboxylase 2 (967 aa).

S13 is subject to Phosphoserine. Catalysis depends on residues H174 and K602.

It belongs to the PEPCase type 1 family. In terms of assembly, homotetramer. Mg(2+) is required as a cofactor.

It is found in the cytoplasm. The catalysed reaction is oxaloacetate + phosphate = phosphoenolpyruvate + hydrogencarbonate. Its pathway is photosynthesis; C3 acid pathway. With respect to regulation, by light-reversible phosphorylation. Functionally, through the carboxylation of phosphoenolpyruvate (PEP) it forms oxaloacetate, a four-carbon dicarboxylic acid source for the tricarboxylic acid cycle. This Zea mays (Maize) protein is Phosphoenolpyruvate carboxylase 2 (PEP4).